We begin with the raw amino-acid sequence, 201 residues long: Dimethylsulfoniopropionate lyase DddQ (201 aa).

Positions 130, 134, 136, and 169 each coordinate a divalent metal cation.

It belongs to the non-heme iron-dependent dioxygenase family. In terms of assembly, homodimer. The cofactor is a divalent metal cation.

The enzyme catalyses S,S-dimethyl-beta-propiothetin = acrylate + dimethyl sulfide + H(+). Its function is as follows. May act as a dimethylsulfoniopropionate (DMSP) in vitro, releasing dimethyl sulfide (DMS). DMS is the principal form by which sulfur is transported from oceans to the atmosphere. The real activity of the protein is however subject to debate and it is unclear whether it constitutes a real dimethylsulfoniopropionate lyase in vivo. The protein is Dimethylsulfoniopropionate lyase DddQ of Ruegeria pomeroyi (strain ATCC 700808 / DSM 15171 / DSS-3) (Silicibacter pomeroyi).